We begin with the raw amino-acid sequence, 148 residues long: NADPH-dependent 7-cyano-7-deazaguanine reductase (148 aa).

Catalysis depends on Cys-50, which acts as the Thioimide intermediate. Asp-57 serves as the catalytic Proton donor. Substrate contacts are provided by residues 72–74 and 91–92; these read VES and HE.

The protein belongs to the GTP cyclohydrolase I family. QueF type 1 subfamily.

The protein localises to the cytoplasm. The catalysed reaction is 7-aminomethyl-7-carbaguanine + 2 NADP(+) = 7-cyano-7-deazaguanine + 2 NADPH + 3 H(+). It participates in tRNA modification; tRNA-queuosine biosynthesis. In terms of biological role, catalyzes the NADPH-dependent reduction of 7-cyano-7-deazaguanine (preQ0) to 7-aminomethyl-7-deazaguanine (preQ1). The protein is NADPH-dependent 7-cyano-7-deazaguanine reductase of Helicobacter pylori (strain J99 / ATCC 700824) (Campylobacter pylori J99).